Here is a 527-residue protein sequence, read N- to C-terminus: UPF0053 protein YegH (527 aa).

7 consecutive transmembrane segments (helical) span residues 14–34 (ITLI…IAIL), 51–71 (LLLA…LVTL), 81–101 (FTFS…LFKA), 122–142 (GAKF…FSLD), 145–165 (ITAV…VIAI), 185–205 (IVIL…AEGF), and 207–227 (FVIP…IEAL). CBS domains are found at residues 306–366 (MTSR…GEPL) and 371–429 (LIRQ…PNEV).

The protein belongs to the UPF0053 family.

Its subcellular location is the cell membrane. This is UPF0053 protein YegH (yegH) from Shigella flexneri.